A 605-amino-acid chain; its full sequence is Class II receptor tyrosine kinase (605 aa).

One can recognise an Ig-like C2-type domain in the interval 1–67 (MWSSPGRNLE…DGESASFRVD (67 aa)). Topologically, residues 1–84 (MWSSPGRNLE…GSNSGVIAGV (84 aa)) are extracellular. 3 N-linked (GlcNAc...) asparagine glycosylation sites follow: asparagine 26, asparagine 44, and asparagine 72. Residues 85–105 (LITLLLLIALIIILICVFWVV) traverse the membrane as a helical segment. At 106–605 (WRYRRRGKFD…GRPRGVAGCV (500 aa)) the chain is on the cytoplasmic side. Residues 209–230 (EELSPIQEKPTRRNTGLSTYSQ) form a disordered region. Over residues 221 to 230 (RNTGLSTYSQ) the composition is skewed to polar residues. Residues 346–605 (IREVKQIGVG…GRPRGVAGCV (260 aa)) form the Protein kinase domain. ATP contacts are provided by residues 352-360 (IGVGQFGAV) and lysine 393. Aspartate 496 serves as the catalytic Proton acceptor. The residue at position 527 (tyrosine 527) is a Phosphotyrosine; by autocatalysis.

The protein belongs to the protein kinase superfamily. Tyr protein kinase family. Insulin receptor subfamily. Post-translationally, phosphorylated.

The protein localises to the cell membrane. It catalyses the reaction L-tyrosyl-[protein] + ATP = O-phospho-L-tyrosyl-[protein] + ADP + H(+). In Geodia cydonium (Sponge), this protein is Class II receptor tyrosine kinase (TK).